A 1135-amino-acid polypeptide reads, in one-letter code: Ubiquitin carboxyl-terminal hydrolase 7 (1135 aa).

In terms of domain architecture, MATH spans 31–172 (EGHLSLDIDC…NDTIKLRCRF (142 aa)). The region spanning 193-503 (IGLRNQGATC…SAYMLVYVRD (311 aa)) is the USP domain. The Nucleophile role is filled by C202. H442 serves as the catalytic Proton acceptor.

This sequence belongs to the peptidase C19 family.

It is found in the nucleus. The enzyme catalyses Thiol-dependent hydrolysis of ester, thioester, amide, peptide and isopeptide bonds formed by the C-terminal Gly of ubiquitin (a 76-residue protein attached to proteins as an intracellular targeting signal).. In terms of biological role, hydrolase that deubiquitinates target proteins. May play a role in regulating the levels of endogenous siRNA biogenesis. In Caenorhabditis elegans, this protein is Ubiquitin carboxyl-terminal hydrolase 7.